The primary structure comprises 194 residues: [Ribosomal protein uS5]-alanine N-acetyltransferase (194 aa).

The N-acetyltransferase domain occupies 18–188 (LVVRLVHDRD…DHVLTALTTP (171 aa)).

Belongs to the acetyltransferase family. RimJ subfamily.

Its subcellular location is the cytoplasm. The enzyme catalyses N-terminal L-alanyl-[ribosomal protein uS5] + acetyl-CoA = N-terminal N(alpha)-acetyl-L-alanyl-[ribosomal protein uS5] + CoA + H(+). Its function is as follows. Acetylates the N-terminal alanine of ribosomal protein uS5. This Shigella flexneri protein is [Ribosomal protein uS5]-alanine N-acetyltransferase (rimJ).